A 123-amino-acid chain; its full sequence is Small ribosomal subunit protein uS13 (123 aa).

The interval 97-123 (PVRGQRTHTNAKTRKGRSKLPVAAKKK) is disordered.

Belongs to the universal ribosomal protein uS13 family. As to quaternary structure, part of the 30S ribosomal subunit. Forms a loose heterodimer with protein S19. Forms two bridges to the 50S subunit in the 70S ribosome.

Located at the top of the head of the 30S subunit, it contacts several helices of the 16S rRNA. In the 70S ribosome it contacts the 23S rRNA (bridge B1a) and protein L5 of the 50S subunit (bridge B1b), connecting the 2 subunits; these bridges are implicated in subunit movement. Contacts the tRNAs in the A and P-sites. The sequence is that of Small ribosomal subunit protein uS13 from Ehrlichia chaffeensis (strain ATCC CRL-10679 / Arkansas).